Reading from the N-terminus, the 1439-residue chain is DNA-directed RNA polymerase subunit beta' (1439 aa).

Residues Cys70, Cys72, Cys85, and Cys88 each contribute to the Zn(2+) site. Residues Asp504, Asp506, and Asp508 each coordinate Mg(2+). Zn(2+) contacts are provided by Cys862, Cys936, Cys943, and Cys946.

Belongs to the RNA polymerase beta' chain family. As to quaternary structure, the RNAP catalytic core consists of 2 alpha, 1 beta, 1 beta' and 1 omega subunit. When a sigma factor is associated with the core the holoenzyme is formed, which can initiate transcription. The cofactor is Mg(2+). Requires Zn(2+) as cofactor.

The catalysed reaction is RNA(n) + a ribonucleoside 5'-triphosphate = RNA(n+1) + diphosphate. DNA-dependent RNA polymerase catalyzes the transcription of DNA into RNA using the four ribonucleoside triphosphates as substrates. The sequence is that of DNA-directed RNA polymerase subunit beta' from Gluconobacter oxydans (strain 621H) (Gluconobacter suboxydans).